The chain runs to 286 residues: Thiazole synthase (286 aa).

K122 serves as the catalytic Schiff-base intermediate with DXP. Residues G183, 209 to 210 (AG), and 231 to 232 (NT) contribute to the 1-deoxy-D-xylulose 5-phosphate site.

Belongs to the ThiG family. In terms of assembly, homotetramer. Forms heterodimers with either ThiH or ThiS.

Its subcellular location is the cytoplasm. The catalysed reaction is [ThiS sulfur-carrier protein]-C-terminal-Gly-aminoethanethioate + 2-iminoacetate + 1-deoxy-D-xylulose 5-phosphate = [ThiS sulfur-carrier protein]-C-terminal Gly-Gly + 2-[(2R,5Z)-2-carboxy-4-methylthiazol-5(2H)-ylidene]ethyl phosphate + 2 H2O + H(+). It functions in the pathway cofactor biosynthesis; thiamine diphosphate biosynthesis. Functionally, catalyzes the rearrangement of 1-deoxy-D-xylulose 5-phosphate (DXP) to produce the thiazole phosphate moiety of thiamine. Sulfur is provided by the thiocarboxylate moiety of the carrier protein ThiS. In vitro, sulfur can be provided by H(2)S. The protein is Thiazole synthase of Synechococcus elongatus (strain ATCC 33912 / PCC 7942 / FACHB-805) (Anacystis nidulans R2).